A 169-amino-acid polypeptide reads, in one-letter code: MLATRALSLIGKRAISTSVCLRAHGSVVKSEDYALPSYVDRRDYPLPDVAHVKLLSASQKALKEKEKADWSSLSRDEKVQLYRIQFNESFAEMNKGTNEWKTVVGLAMFFIGFTALVLIWEKSYVYGPIPHTFDRDWVAMQTKRMLDMKVNPIQGFSAKWDYNKNEWKK.

The transit peptide at 1-22 (MLATRALSLIGKRAISTSVCLR) directs the protein to the mitochondrion. The Mitochondrial matrix portion of the chain corresponds to 23–98 (AHGSVVKSED…SFAEMNKGTN (76 aa)). N6-acetyllysine; alternate is present on Lys-29. An N6-succinyllysine; alternate modification is found at Lys-29. Lys-53 is modified (N6-acetyllysine). 2 positions are modified to phosphoserine: Ser-56 and Ser-58. Lys-60 bears the N6-acetyllysine; alternate mark. Lys-60 carries the N6-succinyllysine; alternate modification. At Lys-67 the chain carries N6-acetyllysine. Residues 99–124 (EWKTVVGLAMFFIGFTALVLIWEKSY) form a helical membrane-spanning segment. Over 125-169 (VYGPIPHTFDRDWVAMQTKRMLDMKVNPIQGFSAKWDYNKNEWKK) the chain is Mitochondrial intermembrane.

This sequence belongs to the cytochrome c oxidase IV family. As to quaternary structure, component of the cytochrome c oxidase (complex IV, CIV), a multisubunit enzyme composed of 14 subunits. The complex is composed of a catalytic core of 3 subunits MT-CO1, MT-CO2 and MT-CO3, encoded in the mitochondrial DNA, and 11 supernumerary subunits COX4I, COX5A, COX5B, COX6A, COX6B, COX6C, COX7A, COX7B, COX7C, COX8 and NDUFA4, which are encoded in the nuclear genome. The complex exists as a monomer or a dimer and forms supercomplexes (SCs) in the inner mitochondrial membrane with NADH-ubiquinone oxidoreductase (complex I, CI) and ubiquinol-cytochrome c oxidoreductase (cytochrome b-c1 complex, complex III, CIII), resulting in different assemblies (supercomplex SCI(1)III(2)IV(1) and megacomplex MCI(2)III(2)IV(2)). Interacts with PHB2; the interaction decreases in absence of SPHK2. Interacts with AFG1L. Interacts with ABCB7; this interaction allows the regulation of cellular iron homeostasis and cellular reactive oxygen species (ROS) levels in cardiomyocytes. Interacts with FLVCR2; this interaction occurs in the absence of heme and is disrupted upon heme binding. Interacts with IRGC.

It localises to the mitochondrion inner membrane. It participates in energy metabolism; oxidative phosphorylation. Functionally, component of the cytochrome c oxidase, the last enzyme in the mitochondrial electron transport chain which drives oxidative phosphorylation. The respiratory chain contains 3 multisubunit complexes succinate dehydrogenase (complex II, CII), ubiquinol-cytochrome c oxidoreductase (cytochrome b-c1 complex, complex III, CIII) and cytochrome c oxidase (complex IV, CIV), that cooperate to transfer electrons derived from NADH and succinate to molecular oxygen, creating an electrochemical gradient over the inner membrane that drives transmembrane transport and the ATP synthase. Cytochrome c oxidase is the component of the respiratory chain that catalyzes the reduction of oxygen to water. Electrons originating from reduced cytochrome c in the intermembrane space (IMS) are transferred via the dinuclear copper A center (CU(A)) of subunit 2 and heme A of subunit 1 to the active site in subunit 1, a binuclear center (BNC) formed by heme A3 and copper B (CU(B)). The BNC reduces molecular oxygen to 2 water molecules using 4 electrons from cytochrome c in the IMS and 4 protons from the mitochondrial matrix. This Rattus norvegicus (Rat) protein is Cytochrome c oxidase subunit 4 isoform 1, mitochondrial (Cox4i1).